A 311-amino-acid polypeptide reads, in one-letter code: tRNA-cytidine(32) 2-sulfurtransferase (311 aa).

The PP-loop motif signature appears at 47-52 (SGGKDS). 3 residues coordinate [4Fe-4S] cluster: C122, C125, and C213.

Belongs to the TtcA family. As to quaternary structure, homodimer. It depends on Mg(2+) as a cofactor. Requires [4Fe-4S] cluster as cofactor.

Its subcellular location is the cytoplasm. The enzyme catalyses cytidine(32) in tRNA + S-sulfanyl-L-cysteinyl-[cysteine desulfurase] + AH2 + ATP = 2-thiocytidine(32) in tRNA + L-cysteinyl-[cysteine desulfurase] + A + AMP + diphosphate + H(+). It functions in the pathway tRNA modification. Catalyzes the ATP-dependent 2-thiolation of cytidine in position 32 of tRNA, to form 2-thiocytidine (s(2)C32). The sulfur atoms are provided by the cysteine/cysteine desulfurase (IscS) system. The polypeptide is tRNA-cytidine(32) 2-sulfurtransferase (Salmonella choleraesuis (strain SC-B67)).